The chain runs to 668 residues: MSSVLDSKWTRSDASKTYDIDRWGAGYFSISDAGTVLVSPDRDPSQSIDLKELVDRLGQRNLDLPILLRFNGILRDRLRELDRCFKNAIHDHKYQSRYRCVFPIKVNQQREVVQQIVSEGARLGFGIEAGSKPELVAAVAMGDANVPIVCNGFKDEEFIRLALLAQRLGRNVLPVVEKVSELDLILDVAKDIGVRPTIGMRVKLATRGSGRWQASGGYRSKFGLTVAELLAQLDRLIAMDMGDCLQLLHFHVGSQIGNIRQLKSAILEAARIYVDLVRRGAGMRYLDVGGGLGVDYDGSRSDSESSMNYTMQEYANDVVYHTQTVCDEAGVPHPELISESGRAVAAHHSVLVMETLGVTSQGVANLPCWAKVEGEPVSPDHGGIEMDSVGAIETSEMEGPPESYEQPVHDLWVGYVNMTQANMMETFHDAQVALDLCMNLFSGGYLPLEQRVAAENLYFAICHRVRELAESMKERPDDLKHLDRMLSDIYFANFSLFQSMPDSWAIDQLFPIMPIHRLLEKPSRHAVLGDITCDSDGKVDAFVCGGGRQRTLMLHPLKSGEPYQLAVFMVGAYQEILGDLHNLFGDTHAVHVDIEDGVTKVRSIVKGDTVSEVLGYVQYEDRELIENLQESVESAIGNGHIDHQQAGETVAAYERALSGYTYLSTRTK.

An N6-(pyridoxal phosphate)lysine modification is found at Lys105. A substrate-binding site is contributed by 286–296; sequence LDVGGGLGVDY.

This sequence belongs to the Orn/Lys/Arg decarboxylase class-II family. SpeA subfamily. Mg(2+) serves as cofactor. Pyridoxal 5'-phosphate is required as a cofactor.

It catalyses the reaction L-arginine + H(+) = agmatine + CO2. Functionally, catalyzes the biosynthesis of agmatine from arginine. The sequence is that of Biosynthetic arginine decarboxylase from Rhodopirellula baltica (strain DSM 10527 / NCIMB 13988 / SH1).